The chain runs to 70 residues: Large ribosomal subunit protein eL38 (70 aa).

It belongs to the eukaryotic ribosomal protein eL38 family.

The protein is Large ribosomal subunit protein eL38 (rpl-38) of Caenorhabditis elegans.